The sequence spans 142 residues: Regulatory protein RecX (142 aa).

This sequence belongs to the RecX family.

The protein localises to the cytoplasm. In terms of biological role, modulates RecA activity. This chain is Regulatory protein RecX, found in Thermus thermophilus (strain ATCC BAA-163 / DSM 7039 / HB27).